Reading from the N-terminus, the 151-residue chain is Ribosome maturation factor RimP (151 aa).

This sequence belongs to the RimP family.

Its subcellular location is the cytoplasm. Required for maturation of 30S ribosomal subunits. This Shewanella sediminis (strain HAW-EB3) protein is Ribosome maturation factor RimP.